Here is a 251-residue protein sequence, read N- to C-terminus: 4-hydroxy-tetrahydrodipicolinate reductase (251 aa).

8 to 13 (GALGRM) is a binding site for NAD(+). R36 contacts NADP(+). NAD(+) contacts are provided by residues 89 to 91 (GTT) and 113 to 116 (TTNF). The Proton donor/acceptor role is filled by H145. A (S)-2,3,4,5-tetrahydrodipicolinate-binding site is contributed by H146. The active-site Proton donor is K149. 155-156 (GT) is a (S)-2,3,4,5-tetrahydrodipicolinate binding site.

This sequence belongs to the DapB family.

It is found in the cytoplasm. The enzyme catalyses (S)-2,3,4,5-tetrahydrodipicolinate + NAD(+) + H2O = (2S,4S)-4-hydroxy-2,3,4,5-tetrahydrodipicolinate + NADH + H(+). It carries out the reaction (S)-2,3,4,5-tetrahydrodipicolinate + NADP(+) + H2O = (2S,4S)-4-hydroxy-2,3,4,5-tetrahydrodipicolinate + NADPH + H(+). Its pathway is amino-acid biosynthesis; L-lysine biosynthesis via DAP pathway; (S)-tetrahydrodipicolinate from L-aspartate: step 4/4. In terms of biological role, catalyzes the conversion of 4-hydroxy-tetrahydrodipicolinate (HTPA) to tetrahydrodipicolinate. This is 4-hydroxy-tetrahydrodipicolinate reductase from Methanocorpusculum labreanum (strain ATCC 43576 / DSM 4855 / Z).